Consider the following 1523-residue polypeptide: Slit homolog 3 protein (1523 aa).

The N-terminal stretch at 1–33 (MALGRTGAGAAVRARLALGLALASILSGPPAAA) is a signal peptide. The LRRNT domain occupies 34 to 61 (CPTKCTCSAASVDCHGLGLRAVPRGIPR). LRR repeat units lie at residues 62-83 (NAER…DFAG), 86-107 (NLRV…AFQD), 110-131 (QLER…LFQS), 134-155 (KLTR…AFRG), 158-179 (GVKN…AFRA), and 182-203 (DLEI…SFNH). The N-linked (GlcNAc...) asparagine glycan is linked to asparagine 72. Asparagine 192 carries N-linked (GlcNAc...) asparagine glycosylation. The LRRCT 1 domain occupies 215-265 (NHLYCDCHLAWLSDWLRQRRTIGQFTLCMAPVHLRGFSVADVQKKEYVCPG). The region spanning 271–307 (PACNANSLSCPSACSCSNNIVDCRGKGLTEIPANLPE) is the LRRNT 2 domain. Cysteine 284 and cysteine 293 form a disulfide bridge. 5 LRR repeats span residues 308-329 (GIVE…AFTQ), 332-353 (KLKR…AFQG), 356-377 (SLTS…LFDG), 380-401 (SLQL…TFQD), and 404-425 (NLNL…LFVP). An LRRCT 2 domain is found at 437-487 (NPFVCDCHLKWLADYLQDNPIETSGARCSSPRRLANKRISQIKSKKFRCSG). 4 cysteine pairs are disulfide-bonded: cysteine 441-cysteine 464, cysteine 443-cysteine 485, cysteine 505-cysteine 511, and cysteine 509-cysteine 518. Residues 496-532 (SSECFMDLVCPEKCRCEGTIVDCSNQKLARIPSHLPE) form the LRRNT 3 domain. LRR repeat units lie at residues 533–554 (YTTD…GIFK), 558–579 (NLRK…AFDG), 582–603 (GVQE…MFRG), 606–627 (SLKT…TFAG), and 630–651 (SVRL…AFTT). A glycan (N-linked (GlcNAc...) asparagine) is linked at asparagine 563. An N-linked (GlcNAc...) asparagine glycan is attached at asparagine 622. One can recognise an LRRCT 3 domain in the interval 663–713 (NPFNCNCHMAWLGRWLRKRRIVSGNPRCQKPFFLKEIPIQDVAIQDFTCDG). Disulfide bonds link cysteine 667/cysteine 690 and cysteine 669/cysteine 711. In terms of domain architecture, LRRNT 4 spans 716 to 752 (ESSCQLSPRCPEQCTCVETVVRCSNRGLHALPKGMPK). LRR repeat units follow at residues 753–774 (DVTE…LSAF), 776–797 (QLTL…TFSN), 800–821 (HLST…AFNG), and 824–845 (SLRV…SFND). 3 N-linked (GlcNAc...) asparagine glycosylation sites follow: asparagine 784, asparagine 792, and asparagine 797. Residues 857–907 (NPLHCDCSLRWLSEWVKAGYKEPGIARCSSPESMADRLLLTTPTHRFQCKG) form the LRRCT 4 domain. 6 consecutive EGF-like domains span residues 918–953 (NACL…KDCT), 955–994 (PINT…QRCE), 996–1032 (NPDD…ELCD), 1034–1072 (VIDY…KLCE), 1074–1110 (NNDD…LFCE), and 1119–1155 (QTSP…PRCE). Intrachain disulfides connect cysteine 920-cysteine 931, cysteine 925-cysteine 941, cysteine 943-cysteine 952, cysteine 959-cysteine 970, cysteine 964-cysteine 982, cysteine 984-cysteine 993, cysteine 1000-cysteine 1011, cysteine 1005-cysteine 1020, cysteine 1022-cysteine 1031, cysteine 1038-cysteine 1051, cysteine 1045-cysteine 1060, cysteine 1062-cysteine 1071, cysteine 1078-cysteine 1089, cysteine 1083-cysteine 1098, cysteine 1100-cysteine 1109, cysteine 1123-cysteine 1134, cysteine 1128-cysteine 1143, and cysteine 1145-cysteine 1154. Asparagine 928 is a glycosylation site (N-linked (GlcNAc...) asparagine). Asparagine 1025 carries N-linked (GlcNAc...) asparagine glycosylation. Residues 1158 to 1332 (ITVNFVGKDS…PQSLGVSPGC (175 aa)) enclose the Laminin G-like domain. N-linked (GlcNAc...) asparagine glycans are attached at residues asparagine 1181 and asparagine 1247. Intrachain disulfides connect cysteine 1305–cysteine 1332, cysteine 1355–cysteine 1364, cysteine 1372–cysteine 1382, cysteine 1377–cysteine 1391, and cysteine 1393–cysteine 1402. EGF-like domains follow at residues 1340–1365 (HGLC…PLCD) and 1368–1403 (ARDP…ALCD). Residue asparagine 1406 is glycosylated (N-linked (GlcNAc...) asparagine). An EGF-like 9 domain is found at 1408 to 1444 (SASACSAFKCHHGQCHISDRGEPYCLCQPGFSGHHCE). 7 disulfides stabilise this stretch: cysteine 1412–cysteine 1422, cysteine 1417–cysteine 1432, cysteine 1434–cysteine 1443, cysteine 1449–cysteine 1487, cysteine 1467–cysteine 1501, cysteine 1478–cysteine 1517, and cysteine 1482–cysteine 1519. The CTCK domain occupies 1449–1523 (CMGEIVREAI…HLECGCRACS (75 aa)).

It localises to the secreted. Its function is as follows. May act as molecular guidance cue in cellular migration, and function may be mediated by interaction with roundabout homolog receptors. The sequence is that of Slit homolog 3 protein (Slit3) from Mus musculus (Mouse).